We begin with the raw amino-acid sequence, 125 residues long: Small ribosomal subunit protein uS12 (125 aa).

Position 89 is a 3-methylthioaspartic acid (aspartate 89). The disordered stretch occupies residues 100–125 (GSLDTQGVQNRKQARSKYGAKRPKKA). Residues 111-125 (KQARSKYGAKRPKKA) are compositionally biased toward basic residues.

This sequence belongs to the universal ribosomal protein uS12 family. As to quaternary structure, part of the 30S ribosomal subunit. Contacts proteins S8 and S17. May interact with IF1 in the 30S initiation complex.

In terms of biological role, with S4 and S5 plays an important role in translational accuracy. Interacts with and stabilizes bases of the 16S rRNA that are involved in tRNA selection in the A site and with the mRNA backbone. Located at the interface of the 30S and 50S subunits, it traverses the body of the 30S subunit contacting proteins on the other side and probably holding the rRNA structure together. The combined cluster of proteins S8, S12 and S17 appears to hold together the shoulder and platform of the 30S subunit. This Thioalkalivibrio sulfidiphilus (strain HL-EbGR7) protein is Small ribosomal subunit protein uS12.